The following is a 276-amino-acid chain: S-adenosylmethionine decarboxylase proenzyme (276 aa).

Serine 124 serves as the catalytic Schiff-base intermediate with substrate; via pyruvic acid. A Pyruvic acid (Ser); by autocatalysis modification is found at serine 124. Histidine 129 functions as the Proton acceptor; for processing activity in the catalytic mechanism. The Proton donor; for catalytic activity role is filled by cysteine 152.

It belongs to the prokaryotic AdoMetDC family. Type 2 subfamily. As to quaternary structure, heterooctamer of four alpha and four beta chains arranged as a tetramer of alpha/beta heterodimers. Pyruvate is required as a cofactor. Is synthesized initially as an inactive proenzyme. Formation of the active enzyme involves a self-maturation process in which the active site pyruvoyl group is generated from an internal serine residue via an autocatalytic post-translational modification. Two non-identical subunits are generated from the proenzyme in this reaction, and the pyruvate is formed at the N-terminus of the alpha chain, which is derived from the carboxyl end of the proenzyme. The post-translation cleavage follows an unusual pathway, termed non-hydrolytic serinolysis, in which the side chain hydroxyl group of the serine supplies its oxygen atom to form the C-terminus of the beta chain, while the remainder of the serine residue undergoes an oxidative deamination to produce ammonia and the pyruvoyl group blocking the N-terminus of the alpha chain.

The enzyme catalyses S-adenosyl-L-methionine + H(+) = S-adenosyl 3-(methylsulfanyl)propylamine + CO2. Its pathway is amine and polyamine biosynthesis; S-adenosylmethioninamine biosynthesis; S-adenosylmethioninamine from S-adenosyl-L-methionine: step 1/1. Catalyzes the decarboxylation of S-adenosylmethionine to S-adenosylmethioninamine (dcAdoMet), the propylamine donor required for the synthesis of the polyamines spermine and spermidine from the diamine putrescine. The chain is S-adenosylmethionine decarboxylase proenzyme from Desulfitobacterium hafniense (strain Y51).